Here is a 398-residue protein sequence, read N- to C-terminus: tRNA-specific 2-thiouridylase MnmA (398 aa).

Residues 18–25 (AMSGGVDS) and Leu44 contribute to the ATP site. The active-site Nucleophile is Cys112. Cysteines 112 and 213 form a disulfide. An ATP-binding site is contributed by Gly136. Residues 163 to 165 (RDQ) are interaction with tRNA. The active-site Cysteine persulfide intermediate is the Cys213.

Belongs to the MnmA/TRMU family.

It is found in the cytoplasm. The catalysed reaction is S-sulfanyl-L-cysteinyl-[protein] + uridine(34) in tRNA + AH2 + ATP = 2-thiouridine(34) in tRNA + L-cysteinyl-[protein] + A + AMP + diphosphate + H(+). Functionally, catalyzes the 2-thiolation of uridine at the wobble position (U34) of tRNA, leading to the formation of s(2)U34. This chain is tRNA-specific 2-thiouridylase MnmA, found in Sinorhizobium medicae (strain WSM419) (Ensifer medicae).